A 240-amino-acid polypeptide reads, in one-letter code: UDP-2,3-diacylglucosamine hydrolase (240 aa).

Mn(2+) is bound by residues Asp-8, His-10, Asp-41, Asn-79, and His-114. 79-80 (NR) contacts substrate. 5 residues coordinate substrate: Asp-122, Ser-160, Asn-164, Lys-167, and His-195. Residues His-195 and His-197 each contribute to the Mn(2+) site.

It belongs to the LpxH family. It depends on Mn(2+) as a cofactor.

It is found in the cell inner membrane. The enzyme catalyses UDP-2-N,3-O-bis[(3R)-3-hydroxytetradecanoyl]-alpha-D-glucosamine + H2O = 2-N,3-O-bis[(3R)-3-hydroxytetradecanoyl]-alpha-D-glucosaminyl 1-phosphate + UMP + 2 H(+). The protein operates within glycolipid biosynthesis; lipid IV(A) biosynthesis; lipid IV(A) from (3R)-3-hydroxytetradecanoyl-[acyl-carrier-protein] and UDP-N-acetyl-alpha-D-glucosamine: step 4/6. In terms of biological role, hydrolyzes the pyrophosphate bond of UDP-2,3-diacylglucosamine to yield 2,3-diacylglucosamine 1-phosphate (lipid X) and UMP by catalyzing the attack of water at the alpha-P atom. Involved in the biosynthesis of lipid A, a phosphorylated glycolipid that anchors the lipopolysaccharide to the outer membrane of the cell. This Salmonella arizonae (strain ATCC BAA-731 / CDC346-86 / RSK2980) protein is UDP-2,3-diacylglucosamine hydrolase.